Consider the following 959-residue polypeptide: General transcription factor II-I repeat domain-containing protein 1 (959 aa).

Glycyl lysine isopeptide (Lys-Gly) (interchain with G-Cter in SUMO2) cross-links involve residues lysine 27 and lysine 94. Basic and acidic residues predominate over residues 96-106; it reads PEAEHPKKVQR. The tract at residues 96–117 is disordered; it reads PEAEHPKKVQRGEGGGRSLPRS. The GTF2I-like 1 repeat unit spans residues 119–213; sequence LEHGSDVYLL…LEDGGRDSKA (95 aa). Residues lysine 184, lysine 212, lysine 225, lysine 238, lysine 271, lysine 294, lysine 308, lysine 337, lysine 436, lysine 439, and lysine 443 each participate in a glycyl lysine isopeptide (Lys-Gly) (interchain with G-Cter in SUMO2) cross-link. A disordered region spans residues 230-250; the sequence is CGLHGQAPKVPPQDLPPTATS. The stretch at 342–436 is one GTF2I-like 2 repeat; it reads IKETEDINTL…FDERIFTGNK (95 aa). Residue serine 448 is modified to Phosphoserine. Positions 468–492 are disordered; that stretch reads NARSDKGSMSEDCGPGTSGELGGLR. Residues 556-650 form a GTF2I-like 3 repeat; sequence DSHGDVIRPL…ELLTEGVKEP (95 aa). Glycyl lysine isopeptide (Lys-Gly) (interchain with G-Cter in SUMO2) cross-links involve residues lysine 567, lysine 579, lysine 588, lysine 622, lysine 638, and lysine 648. At serine 654 the chain carries Phosphoserine. The interval 654–679 is disordered; that stretch reads SQGTASSLGFSPPALPPERDSGDPLV. Glycyl lysine isopeptide (Lys-Gly) (interchain with G-Cter in SUMO2) cross-links involve residues proline 669, proline 670, aspartate 680, and lysine 684. Glutamine 686 bears the Phosphoserine mark. GTF2I-like repeat units lie at residues 696 to 790 and 793 to 887; these read LSRI…KPDE and ANRL…ICND. Residues isoleucine 701, lysine 724, lysine 732, lysine 772, lysine 774, lysine 787, lysine 829, lysine 889, and lysine 893 each participate in a glycyl lysine isopeptide (Lys-Gly) (interchain with G-Cter in SUMO2) cross-link. The disordered stretch occupies residues 892-927; that stretch reads AKDSSIPKRKRKRVSEGNSVSSSSSSSSSSSSNPDS. The Nuclear localization signal motif lies at 898-905; it reads PKRKRKRV. Residues 910–923 show a composition bias toward low complexity; it reads SVSSSSSSSSSSSS.

Belongs to the TFII-I family. In terms of assembly, interacts with the retinoblastoma protein (RB1) via its C-terminus. Highly expressed in adult skeletal muscle, heart, fibroblast, bone and fetal tissues. Expressed at lower levels in all other tissues tested.

Its subcellular location is the nucleus. In terms of biological role, may be a transcription regulator involved in cell-cycle progression and skeletal muscle differentiation. May repress GTF2I transcriptional functions, by preventing its nuclear residency, or by inhibiting its transcriptional activation. May contribute to slow-twitch fiber type specificity during myogenesis and in regenerating muscles. Binds troponin I slow-muscle fiber enhancer (USE B1). Binds specifically and with high affinity to the EFG sequences derived from the early enhancer of HOXC8. In Homo sapiens (Human), this protein is General transcription factor II-I repeat domain-containing protein 1 (GTF2IRD1).